A 30-amino-acid chain; its full sequence is Dicynthaurin (30 aa).

Thr30 bears the Threonine amide mark.

As to quaternary structure, homodimer.

Its subcellular location is the secreted. Functionally, shows antibacterial activity against both Gram-positive and Gram-negative bacteria. Its antimicrobial activity is optimal at NaCl concentrations below 100 mM, suggesting that the antimicrobial actions of this peptide may take place intracellularly rather than extracellularly. Has no activity against the fungus C.albicans. Has modest hemolytic activity. The sequence is that of Dicynthaurin from Halocynthia aurantium (Sea peach).